The primary structure comprises 306 residues: MADKIAVLLGGTSAERDVSLNSGAAVLAGLREGGINAHPVDPQEVDVAQLKAMGFQKVFIALHGRGGEDGTLQGMLELLGLPYTGSGVMASALSMDKLRSKLLWQGAGLPVAPWVALTRAEFEKGLSEEQKARISALGLPLIVKPSREGSSVGMTKVVEENALQGALSLAFQHDDEILIEKWLCGPEFTVAIVGEEILPSIRIQPAGTFYDYEAKYLSDETQYFCPAGLDASQEAALQSLVLQAWKALGCTGWGRIDVMLDSDGQFYLLEANTSPGMTSHSLVPMAARQAGMSFSQLVVRILELAD.

In terms of domain architecture, ATP-grasp spans 101-303 (KLLWQGAGLP…FSQLVVRILE (203 aa)). 134-189 (ISALGLPLIVKPSREGSSVGMTKVVEENALQGALSLAFQHDDEILIEKWLCGPEFT) is a binding site for ATP. Mg(2+) contacts are provided by aspartate 257, glutamate 270, and asparagine 272.

Belongs to the D-alanine--D-alanine ligase family. In terms of assembly, monomer. Requires Mg(2+) as cofactor. It depends on Mn(2+) as a cofactor.

Its subcellular location is the cytoplasm. The catalysed reaction is 2 D-alanine + ATP = D-alanyl-D-alanine + ADP + phosphate + H(+). It participates in cell wall biogenesis; peptidoglycan biosynthesis. Functionally, cell wall formation. The chain is D-alanine--D-alanine ligase B (ddlB) from Salmonella typhimurium (strain LT2 / SGSC1412 / ATCC 700720).